An 821-amino-acid chain; its full sequence is Serine/threonine-protein kinase RAD53 (821 aa).

A Phosphoserine modification is found at S24. The FHA 1 domain maps to 66–116 (WTFGRNPACDYHLGNISRLSNKHFQILLGEDGNLLLNDISTNGTWLNGQKV). S175 bears the Phosphoserine mark. The 269-residue stretch at 198-466 (SIIDEVVGQG…AAKALNHPWI (269 aa)) folds into the Protein kinase domain. ATP-binding positions include 204–212 (VGQGAFATV) and K227. Residue D319 is the Proton acceptor of the active site. Phosphoserine occurs at positions 547 and 560. Positions 601–664 (FFIGRSEDCN…NVSYLNNNRM (64 aa)) constitute an FHA 2 domain. The segment at 735-770 (AAQRANQPSASSSSMSAKKPPVSDTNNNGNNSVLND) is disordered. A compositionally biased stretch (low complexity) spans 742–770 (PSASSSSMSAKKPPVSDTNNNGNNSVLND). 2 positions are modified to phosphoserine: S774 and S793. The tract at residues 791–821 (SLSQSQIDPSKKVKRAKLDQTSKGPENLQFS) is disordered. A compositionally biased stretch (polar residues) spans 809-821 (DQTSKGPENLQFS).

The protein belongs to the protein kinase superfamily. CAMK Ser/Thr protein kinase family. CHEK2 subfamily. Interacts (via domain FHA 1) with PTC2 (when phosphorylated); the interaction is direct and serves to regulate DNA damage checkpoint signaling. Interacts with PIN4. Autophosphorylated. Phosphorylated in response to DNA double-strand breaks; dephosphorylation is mediated by PTC2 and PTC3.

Its subcellular location is the nucleus. It catalyses the reaction L-seryl-[protein] + ATP = O-phospho-L-seryl-[protein] + ADP + H(+). It carries out the reaction L-threonyl-[protein] + ATP = O-phospho-L-threonyl-[protein] + ADP + H(+). The catalysed reaction is L-tyrosyl-[protein] + ATP = O-phospho-L-tyrosyl-[protein] + ADP + H(+). Inactivated by dephosphorylation via recruitment of PTC2. In terms of biological role, controls S-phase checkpoint as well as G1 and G2 DNA damage checkpoints. Phosphorylates proteins on serine, threonine, and tyrosine. Prevents entry into anaphase and mitotic exit after DNA damage via regulation of the Polo kinase CDC5. Seems to be involved in the phosphorylation of RPH1. The chain is Serine/threonine-protein kinase RAD53 (RAD53) from Saccharomyces cerevisiae (strain ATCC 204508 / S288c) (Baker's yeast).